A 478-amino-acid polypeptide reads, in one-letter code: Divinyl ether synthase CYP74D2 (478 aa).

Heme is bound at residue cysteine 431.

This sequence belongs to the cytochrome P450 family. 9-divinyl ether synthase subfamily. As to expression, expressed in roots.

The enzyme catalyses (9S)-hydroperoxy-(10E,12Z)-octadecadienoate = colneleate + H2O. The catalysed reaction is (9S)-hydroperoxy-(10E,12Z,15Z)-octadecatrienoate = colnelenate + H2O. In terms of biological role, involved in the biosynthesis of the anti-fungal and antibacterial toxins colneleate and colnelenate. Can use (9S)-hydroperoxy-(10E,12Z)-octadecadienoate (9-HPOD) and (9S)-hydroperoxy-(10E,12Z,15Z)-octadecatrienoate (9-HPOT) as substrates but has no activity with the corresponding 13-hydroperoxides (13-HPOD and 13-HPOT). This Solanum tuberosum (Potato) protein is Divinyl ether synthase CYP74D2.